Reading from the N-terminus, the 357-residue chain is Spermatogenesis- and oogenesis-specific basic helix-loop-helix-containing protein 1 (357 aa).

Positions 1-14 (MASGGHERANEDYR) are enriched in basic and acidic residues. Residues 1–40 (MASGGHERANEDYRVSGITGCSKTPQPETQDSLQTSSQSS) form a disordered region. Positions 19–31 (TGCSKTPQPETQD) are enriched in polar residues. The region spanning 54-105 (PSLRRNVVSERERRRRISLSCEHLRALLPQFDGRREDMASVLEMSVYFLQLA) is the bHLH domain. Positions 145-210 (KPDSGIAKPS…EPESSSLGPG (66 aa)) are disordered. Residues 200–209 (SEPESSSLGP) show a composition bias toward low complexity.

As to quaternary structure, forms both hetero- and homodimers with SOHLH2. As to expression, in males, it is mainly expressed in testis, while in females it is mainly expressed in ovary. In testis, it is exclusively expressed in spermatogonia, with a preference for prespermatogonia and type A spermatogonia. In ovary, it is detected in germ cell cysts, primordial follicles, and primary follicles but is undetectable by the secondary follicle stage (at protein level). Expressed in the majority of spermatogonia in adult animals, but not in the most undifferentiated spermatogonial population.

The protein localises to the cytoplasm. The protein resides in the nucleus. Its function is as follows. Transcription regulator of both male and female germline differentiation. Suppresses genes involved in spermatogonial stem cells maintenance, and induces genes important for spermatogonial differentiation. Coordinates oocyte differentiation without affecting meiosis I. The sequence is that of Spermatogenesis- and oogenesis-specific basic helix-loop-helix-containing protein 1 (Sohlh1) from Mus musculus (Mouse).